The following is a 1715-amino-acid chain: Protein PHYLLO, chloroplastic (1715 aa).

A chloroplast-targeting transit peptide spans 1–19 (MRSSFLVSNPPFLPSLIPR). The tract at residues 20–273 (YSSRKSIRRS…EKSIFQVSSH (254 aa)) is inactive isochorismate synthase. Residues 363-933 (NAVWASAIIE…GTKSELEDAL (571 aa)) form a 2-succinyl-5-enolpyruvyl-6-hydroxy-3-cyclohexene-1-carboxylate synthase region. A helical membrane pass occupies residues 429–449 (AVIITSSGTAVSNLLPAVVEA). The interval 981 to 1364 (FLHPMIKNVL…SEDVMMNTLG (384 aa)) is O-succinylbenzoate synthase. Lysine 1170 acts as the Proton donor; for the o-succinylbenzoate synthase activity in catalysis. Positions 1202, 1228, and 1251 each coordinate Mg(2+). Lysine 1279 acts as the Proton acceptor; for the o-succinylbenzoate synthase activity in catalysis. The segment at 1418–1715 (HFIRVHDVGE…QKLLLALKEM (298 aa)) is 2-succinyl-6-hydroxy-2,4-cyclohexadiene-1-carboxylate synthase. Residues 1435 to 1540 (LFLHGFLGTG…EGAVVVSGSP (106 aa)) enclose the AB hydrolase-1 domain.

This sequence in the N-terminal section; belongs to the isochorismate synthase family. It in the 2nd section; belongs to the TPP enzyme family. MenD subfamily. The protein in the 3rd section; belongs to the mandelate racemase/muconate lactonizing enzyme family. MenC type 1 subfamily. In the C-terminal section; belongs to the AB hydrolase superfamily. MenH family. Requires Mg(2+) as cofactor. The cofactor is Mn(2+). Thiamine diphosphate is required as a cofactor.

It is found in the plastid. Its subcellular location is the chloroplast membrane. It carries out the reaction isochorismate + 2-oxoglutarate + H(+) = 5-enolpyruvoyl-6-hydroxy-2-succinyl-cyclohex-3-ene-1-carboxylate + CO2. The enzyme catalyses (1R,6R)-6-hydroxy-2-succinyl-cyclohexa-2,4-diene-1-carboxylate = 2-succinylbenzoate + H2O. It catalyses the reaction 5-enolpyruvoyl-6-hydroxy-2-succinyl-cyclohex-3-ene-1-carboxylate = (1R,6R)-6-hydroxy-2-succinyl-cyclohexa-2,4-diene-1-carboxylate + pyruvate. In terms of biological role, multifunctional enzyme required for phylloquinone (vitamin K1) biosynthesis. This chain is Protein PHYLLO, chloroplastic (PHYLLO), found in Arabidopsis thaliana (Mouse-ear cress).